The sequence spans 249 residues: Enolase-phosphatase E1 (249 aa).

Residues aspartate 14 and glutamate 16 each contribute to the Mg(2+) site. Substrate contacts are provided by residues 141–142 (SS) and lysine 175. Aspartate 200 is a Mg(2+) binding site.

Belongs to the HAD-like hydrolase superfamily. MasA/MtnC family. As to quaternary structure, monomer. Mg(2+) serves as cofactor.

The protein resides in the cytoplasm. The protein localises to the nucleus. The enzyme catalyses 5-methylsulfanyl-2,3-dioxopentyl phosphate + H2O = 1,2-dihydroxy-5-(methylsulfanyl)pent-1-en-3-one + phosphate. Its pathway is amino-acid biosynthesis; L-methionine biosynthesis via salvage pathway; L-methionine from S-methyl-5-thio-alpha-D-ribose 1-phosphate: step 3/6. It participates in amino-acid biosynthesis; L-methionine biosynthesis via salvage pathway; L-methionine from S-methyl-5-thio-alpha-D-ribose 1-phosphate: step 4/6. Functionally, bifunctional enzyme that catalyzes the enolization of 2,3-diketo-5-methylthiopentyl-1-phosphate (DK-MTP-1-P) into the intermediate 2-hydroxy-3-keto-5-methylthiopentenyl-1-phosphate (HK-MTPenyl-1-P), which is then dephosphorylated to form the acireductone 1,2-dihydroxy-3-keto-5-methylthiopentene (DHK-MTPene). The protein is Enolase-phosphatase E1 of Drosophila virilis (Fruit fly).